The sequence spans 70 residues: SPbeta prophage-derived uncharacterized HTH-type transcriptional regulator YopO (70 aa).

Positions isoleucine 5–leucine 59 constitute an HTH cro/C1-type domain. Positions isoleucine 16 to glutamate 35 form a DNA-binding region, H-T-H motif.

This chain is SPbeta prophage-derived uncharacterized HTH-type transcriptional regulator YopO (yopO), found in Bacillus subtilis (strain 168).